The primary structure comprises 137 residues: Large ribosomal subunit protein uL16 (137 aa).

Over residues 1–13 (MLQPSRRKYRKEQ) the composition is skewed to basic residues. A disordered region spans residues 1 to 22 (MLQPSRRKYRKEQKGRNTGLAT).

This sequence belongs to the universal ribosomal protein uL16 family. As to quaternary structure, part of the 50S ribosomal subunit.

In terms of biological role, binds 23S rRNA and is also seen to make contacts with the A and possibly P site tRNAs. This Azoarcus sp. (strain BH72) protein is Large ribosomal subunit protein uL16.